The sequence spans 189 residues: CDP-archaeol synthase (189 aa).

5 consecutive transmembrane segments (helical) span residues 6-26, 71-91, 96-116, 125-145, and 162-184; these read VAIA…AVLA, GVVL…TVGV, IAAA…ASFL, GAAF…ALTA, and VAIF…AFGL.

It belongs to the CDP-archaeol synthase family. The cofactor is Mg(2+).

The protein resides in the cell membrane. The enzyme catalyses 2,3-bis-O-(geranylgeranyl)-sn-glycerol 1-phosphate + CTP + H(+) = CDP-2,3-bis-O-(geranylgeranyl)-sn-glycerol + diphosphate. It participates in membrane lipid metabolism; glycerophospholipid metabolism. Functionally, catalyzes the formation of CDP-2,3-bis-(O-geranylgeranyl)-sn-glycerol (CDP-archaeol) from 2,3-bis-(O-geranylgeranyl)-sn-glycerol 1-phosphate (DGGGP) and CTP. This reaction is the third ether-bond-formation step in the biosynthesis of archaeal membrane lipids. The chain is CDP-archaeol synthase from Natronomonas pharaonis (strain ATCC 35678 / DSM 2160 / CIP 103997 / JCM 8858 / NBRC 14720 / NCIMB 2260 / Gabara) (Halobacterium pharaonis).